The primary structure comprises 213 residues: MISYLKGIVAGIQNVGSNRVILTLEVNGMGYDLQIPQRLAKQLPTTGDLVQIFTHYQVREEIPLLYGFSSPAERDLFRHLLSVSGVGAASAIALLDTLELPDLVQAIIAANVQILIQAPGVGKKIAERVCLELKAKLIEWRKSAGFFVATEGPAPGILEEVQMTLFALGYTAHEVSHALHVVSEDIGLPKDAYVEDWIKQAIAHLSSSEQVSH.

The tract at residues 1–69 (MISYLKGIVA…EEIPLLYGFS (69 aa)) is domain I. The segment at 70-148 (SPAERDLFRH…EWRKSAGFFV (79 aa)) is domain II. Positions 149–158 (ATEGPAPGIL) are flexible linker. Positions 158-213 (LEEVQMTLFALGYTAHEVSHALHVVSEDIGLPKDAYVEDWIKQAIAHLSSSEQVSH) are domain III.

It belongs to the RuvA family. As to quaternary structure, homotetramer. Forms an RuvA(8)-RuvB(12)-Holliday junction (HJ) complex. HJ DNA is sandwiched between 2 RuvA tetramers; dsDNA enters through RuvA and exits via RuvB. An RuvB hexamer assembles on each DNA strand where it exits the tetramer. Each RuvB hexamer is contacted by two RuvA subunits (via domain III) on 2 adjacent RuvB subunits; this complex drives branch migration. In the full resolvosome a probable DNA-RuvA(4)-RuvB(12)-RuvC(2) complex forms which resolves the HJ.

It is found in the cytoplasm. In terms of biological role, the RuvA-RuvB-RuvC complex processes Holliday junction (HJ) DNA during genetic recombination and DNA repair, while the RuvA-RuvB complex plays an important role in the rescue of blocked DNA replication forks via replication fork reversal (RFR). RuvA specifically binds to HJ cruciform DNA, conferring on it an open structure. The RuvB hexamer acts as an ATP-dependent pump, pulling dsDNA into and through the RuvAB complex. HJ branch migration allows RuvC to scan DNA until it finds its consensus sequence, where it cleaves and resolves the cruciform DNA. In Nostoc sp. (strain PCC 7120 / SAG 25.82 / UTEX 2576), this protein is Holliday junction branch migration complex subunit RuvA.